The sequence spans 163 residues: Probable chemoreceptor glutamine deamidase CheD (163 aa).

It belongs to the CheD family.

The enzyme catalyses L-glutaminyl-[protein] + H2O = L-glutamyl-[protein] + NH4(+). In terms of biological role, probably deamidates glutamine residues to glutamate on methyl-accepting chemotaxis receptors (MCPs), playing an important role in chemotaxis. This is Probable chemoreceptor glutamine deamidase CheD from Borreliella afzelii (strain PKo) (Borrelia afzelii).